The chain runs to 341 residues: Large ribosomal subunit protein uL10 (341 aa).

Residues 301–341 (EAAPAAAPAAEEKAEEEKKEEEEEKKEDQELSGLDSIFGGF) form a disordered region.

The protein belongs to the universal ribosomal protein uL10 family. Part of the 50S ribosomal subunit. Forms part of the ribosomal stalk which helps the ribosome interact with GTP-bound translation factors. Forms a heptameric L10(L12)2(L12)2(L12)2 complex, where L10 forms an elongated spine to which the L12 dimers bind in a sequential fashion.

Its function is as follows. Forms part of the ribosomal stalk, playing a central role in the interaction of the ribosome with GTP-bound translation factors. The chain is Large ribosomal subunit protein uL10 from Aeropyrum pernix (strain ATCC 700893 / DSM 11879 / JCM 9820 / NBRC 100138 / K1).